Consider the following 557-residue polypeptide: Dihydroxy-acid dehydratase (557 aa).

Cysteine 50 lines the [2Fe-2S] cluster pocket. Aspartate 82 contacts Mg(2+). Cysteine 123 provides a ligand contact to [2Fe-2S] cluster. Mg(2+) is bound by residues aspartate 124 and lysine 125. Residue lysine 125 is modified to N6-carboxylysine. Cysteine 195 is a binding site for [2Fe-2S] cluster. Glutamate 447 provides a ligand contact to Mg(2+). Serine 473 acts as the Proton acceptor in catalysis.

It belongs to the IlvD/Edd family. As to quaternary structure, homodimer. [2Fe-2S] cluster is required as a cofactor. Mg(2+) serves as cofactor.

The catalysed reaction is (2R)-2,3-dihydroxy-3-methylbutanoate = 3-methyl-2-oxobutanoate + H2O. It catalyses the reaction (2R,3R)-2,3-dihydroxy-3-methylpentanoate = (S)-3-methyl-2-oxopentanoate + H2O. The protein operates within amino-acid biosynthesis; L-isoleucine biosynthesis; L-isoleucine from 2-oxobutanoate: step 3/4. Its pathway is amino-acid biosynthesis; L-valine biosynthesis; L-valine from pyruvate: step 3/4. Functions in the biosynthesis of branched-chain amino acids. Catalyzes the dehydration of (2R,3R)-2,3-dihydroxy-3-methylpentanoate (2,3-dihydroxy-3-methylvalerate) into 2-oxo-3-methylpentanoate (2-oxo-3-methylvalerate) and of (2R)-2,3-dihydroxy-3-methylbutanoate (2,3-dihydroxyisovalerate) into 2-oxo-3-methylbutanoate (2-oxoisovalerate), the penultimate precursor to L-isoleucine and L-valine, respectively. This Nitrosomonas europaea (strain ATCC 19718 / CIP 103999 / KCTC 2705 / NBRC 14298) protein is Dihydroxy-acid dehydratase.